The primary structure comprises 609 residues: Elongation factor 4 (609 aa).

A tr-type G domain is found at 11–193; it reads SRIRNFSIIA…QIVEKVPAPS (183 aa). GTP is bound by residues 23–28 and 140–143; these read DHGKST and NKID.

It belongs to the TRAFAC class translation factor GTPase superfamily. Classic translation factor GTPase family. LepA subfamily.

The protein resides in the cell membrane. The catalysed reaction is GTP + H2O = GDP + phosphate + H(+). Functionally, required for accurate and efficient protein synthesis under certain stress conditions. May act as a fidelity factor of the translation reaction, by catalyzing a one-codon backward translocation of tRNAs on improperly translocated ribosomes. Back-translocation proceeds from a post-translocation (POST) complex to a pre-translocation (PRE) complex, thus giving elongation factor G a second chance to translocate the tRNAs correctly. Binds to ribosomes in a GTP-dependent manner. The polypeptide is Elongation factor 4 (Halalkalibacterium halodurans (strain ATCC BAA-125 / DSM 18197 / FERM 7344 / JCM 9153 / C-125) (Bacillus halodurans)).